The sequence spans 426 residues: Putative glutamate--cysteine ligase 2 (426 aa).

It belongs to the glutamate--cysteine ligase type 2 family. YbdK subfamily.

It carries out the reaction L-cysteine + L-glutamate + ATP = gamma-L-glutamyl-L-cysteine + ADP + phosphate + H(+). Its function is as follows. ATP-dependent carboxylate-amine ligase which exhibits weak glutamate--cysteine ligase activity. The chain is Putative glutamate--cysteine ligase 2 from Bradyrhizobium diazoefficiens (strain JCM 10833 / BCRC 13528 / IAM 13628 / NBRC 14792 / USDA 110).